We begin with the raw amino-acid sequence, 330 residues long: uncharacterized protein (330 aa).

125–132 provides a ligand contact to ATP; sequence GPPGCGKT.

Belongs to the AAA ATPase family.

This is an uncharacterized protein from Sinorhizobium fredii (strain NBRC 101917 / NGR234).